The primary structure comprises 366 residues: Aminomethyltransferase (366 aa).

Belongs to the GcvT family. In terms of assembly, the glycine cleavage system is composed of four proteins: P, T, L and H.

The enzyme catalyses N(6)-[(R)-S(8)-aminomethyldihydrolipoyl]-L-lysyl-[protein] + (6S)-5,6,7,8-tetrahydrofolate = N(6)-[(R)-dihydrolipoyl]-L-lysyl-[protein] + (6R)-5,10-methylene-5,6,7,8-tetrahydrofolate + NH4(+). The glycine cleavage system catalyzes the degradation of glycine. The chain is Aminomethyltransferase from Bordetella pertussis (strain Tohama I / ATCC BAA-589 / NCTC 13251).